A 154-amino-acid chain; its full sequence is uncharacterized protein (154 aa).

This sequence belongs to the MG032/MG096/MG288 family.

This is an uncharacterized protein from Mycoplasma pneumoniae (strain ATCC 29342 / M129 / Subtype 1) (Mycoplasmoides pneumoniae).